Here is a 184-residue protein sequence, read N- to C-terminus: Photosystem I assembly protein Ycf4 (184 aa).

Transmembrane regions (helical) follow at residues 22–42 (FCWAFILFFGSLGFLLVGTSS) and 57–77 (IVFFPQGIVMSFYGIAGLFIS).

This sequence belongs to the Ycf4 family.

It is found in the plastid. The protein resides in the chloroplast thylakoid membrane. Its function is as follows. Seems to be required for the assembly of the photosystem I complex. This chain is Photosystem I assembly protein Ycf4, found in Gossypium barbadense (Sea Island cotton).